We begin with the raw amino-acid sequence, 322 residues long: Quinolinate synthase (322 aa).

His-38 and Ser-55 together coordinate iminosuccinate. [4Fe-4S] cluster is bound at residue Cys-100. Iminosuccinate-binding positions include 126-128 and Ser-143; that span reads YIN. Residue Cys-186 coordinates [4Fe-4S] cluster. Residues 212–214 and Thr-229 contribute to the iminosuccinate site; that span reads HPE. [4Fe-4S] cluster is bound at residue Cys-279.

This sequence belongs to the quinolinate synthase family. Type 2 subfamily. Requires [4Fe-4S] cluster as cofactor.

Its subcellular location is the cytoplasm. The enzyme catalyses iminosuccinate + dihydroxyacetone phosphate = quinolinate + phosphate + 2 H2O + H(+). It functions in the pathway cofactor biosynthesis; NAD(+) biosynthesis; quinolinate from iminoaspartate: step 1/1. Catalyzes the condensation of iminoaspartate with dihydroxyacetone phosphate to form quinolinate. This is Quinolinate synthase from Aquifex aeolicus (strain VF5).